Reading from the N-terminus, the 338-residue chain is Ketol-acid reductoisomerase (NADP(+)) (338 aa).

Positions 1–181 constitute a KARI N-terminal Rossmann domain; it reads MKVFYDKDAD…GGGRAGIIET (181 aa). Residues 24 to 27, R47, and S52 each bind NADP(+); that span reads YGSQ. H107 is a catalytic residue. NADP(+) is bound at residue G133. The 146-residue stretch at 182-327 folds into the KARI C-terminal knotted domain; the sequence is NFREETETDL…AKLRAMMPWI (146 aa). 4 residues coordinate Mg(2+): D190, E194, E226, and E230. Residue S251 coordinates substrate.

This sequence belongs to the ketol-acid reductoisomerase family. Mg(2+) is required as a cofactor.

It catalyses the reaction (2R)-2,3-dihydroxy-3-methylbutanoate + NADP(+) = (2S)-2-acetolactate + NADPH + H(+). The catalysed reaction is (2R,3R)-2,3-dihydroxy-3-methylpentanoate + NADP(+) = (S)-2-ethyl-2-hydroxy-3-oxobutanoate + NADPH + H(+). It functions in the pathway amino-acid biosynthesis; L-isoleucine biosynthesis; L-isoleucine from 2-oxobutanoate: step 2/4. Its pathway is amino-acid biosynthesis; L-valine biosynthesis; L-valine from pyruvate: step 2/4. Involved in the biosynthesis of branched-chain amino acids (BCAA). Catalyzes an alkyl-migration followed by a ketol-acid reduction of (S)-2-acetolactate (S2AL) to yield (R)-2,3-dihydroxy-isovalerate. In the isomerase reaction, S2AL is rearranged via a Mg-dependent methyl migration to produce 3-hydroxy-3-methyl-2-ketobutyrate (HMKB). In the reductase reaction, this 2-ketoacid undergoes a metal-dependent reduction by NADPH to yield (R)-2,3-dihydroxy-isovalerate. The chain is Ketol-acid reductoisomerase (NADP(+)) from Ralstonia pickettii (strain 12J).